The sequence spans 206 residues: dTTP/UTP pyrophosphatase (206 aa).

Residue Asp-87 is the Proton acceptor of the active site.

It belongs to the Maf family. YhdE subfamily. The cofactor is a divalent metal cation.

It is found in the cytoplasm. The enzyme catalyses dTTP + H2O = dTMP + diphosphate + H(+). It catalyses the reaction UTP + H2O = UMP + diphosphate + H(+). Nucleoside triphosphate pyrophosphatase that hydrolyzes dTTP and UTP. May have a dual role in cell division arrest and in preventing the incorporation of modified nucleotides into cellular nucleic acids. The protein is dTTP/UTP pyrophosphatase of Aromatoleum aromaticum (strain DSM 19018 / LMG 30748 / EbN1) (Azoarcus sp. (strain EbN1)).